A 36-amino-acid polypeptide reads, in one-letter code: Potassium channel toxin alpha-KTx 1.9 (36 aa).

This sequence belongs to the short scorpion toxin superfamily. Potassium channel inhibitor family. Alpha-KTx 01 subfamily. Expressed by the venom gland.

The protein resides in the secreted. Potent selective inhibitor of Kv1/KCNA voltage-gated potassium channels. This chain is Potassium channel toxin alpha-KTx 1.9, found in Centruroides limbatus (Bark scorpion).